We begin with the raw amino-acid sequence, 290 residues long: Chloride intracellular channel exc-4 (290 aa).

A helical transmembrane segment spans residues 37-57; that stretch reads LFCQEFWMELYALYEIGVARV.

Belongs to the chloride channel CLIC family. As to quaternary structure, monomer. As to expression, expressed in the secretory system, hypodermis, vulva, pharyngeal muscle, rectal gland, tubular rectal epithelium cells, and tubular neuronal support cells in the head and tail.

It localises to the cytoplasm. It is found in the membrane. In terms of biological role, may insert into membranes and form chloride ion channels. Involved in the formation of the excretory canal. Required to prevent cystic lumenal expansions in the excretory cell. Not required for formation of the initial tube, but is required for regulating the size of the tube lumen as it grows. This Caenorhabditis elegans protein is Chloride intracellular channel exc-4 (exc-4).